Here is a 190-residue protein sequence, read N- to C-terminus: Glutathione peroxidase 2 (190 aa).

Residue Sec-40 is part of the active site. Position 40 (Sec-40) is a non-standard amino acid, selenocysteine.

It belongs to the glutathione peroxidase family. In terms of assembly, homotetramer.

Its subcellular location is the cytoplasm. It is found in the cytosol. It catalyses the reaction 2 glutathione + H2O2 = glutathione disulfide + 2 H2O. The catalysed reaction is a hydroperoxy polyunsaturated fatty acid + 2 glutathione = a hydroxy polyunsaturated fatty acid + glutathione disulfide + H2O. The enzyme catalyses tert-butyl hydroperoxide + 2 glutathione = tert-butanol + glutathione disulfide + H2O. It carries out the reaction cumene hydroperoxide + 2 glutathione = 2-phenylpropan-2-ol + glutathione disulfide + H2O. It catalyses the reaction (13S)-hydroperoxy-(9Z,11E)-octadecadienoate + 2 glutathione = (13S)-hydroxy-(9Z,11E)-octadecadienoate + glutathione disulfide + H2O. The catalysed reaction is (5S)-hydroperoxy-(6E,8Z,11Z,14Z)-eicosatetraenoate + 2 glutathione = (5S)-hydroxy-(6E,8Z,11Z,14Z)-eicosatetraenoate + glutathione disulfide + H2O. The enzyme catalyses (12R)-hydroperoxy-(5Z,8Z,10E,14Z)-eicosatetraenoate + 2 glutathione = (12R)-hydroxy-(5Z,8Z,10E,14Z)-eicosatetraenoate + glutathione disulfide + H2O. It carries out the reaction (15S)-hydroperoxy-(5Z,8Z,11Z,13E)-eicosatetraenoate + 2 glutathione = (15S)-hydroxy-(5Z,8Z,11Z,13E)-eicosatetraenoate + glutathione disulfide + H2O. Functionally, catalyzes the reduction of hydroperoxides in a glutathione-dependent manner thus regulating cellular redox homeostasis. Can reduce small soluble hydroperoxides such as H2O2, cumene hydroperoxide and tert-butyl hydroperoxide, as well as several fatty acid-derived hydroperoxides. Cannot reduce phosphatidycholine hydroperoxide. This is Glutathione peroxidase 2 (GPX2) from Pongo pygmaeus (Bornean orangutan).